The sequence spans 153 residues: Aspartate carbamoyltransferase regulatory chain (153 aa).

Zn(2+) is bound by residues cysteine 109, cysteine 114, cysteine 138, and cysteine 141.

This sequence belongs to the PyrI family. As to quaternary structure, contains catalytic and regulatory chains. Zn(2+) serves as cofactor.

Involved in allosteric regulation of aspartate carbamoyltransferase. The polypeptide is Aspartate carbamoyltransferase regulatory chain (Salmonella paratyphi A (strain ATCC 9150 / SARB42)).